The chain runs to 284 residues: Bifunctional protein FolD (284 aa).

Residues 166–168 (GRS) and Ser191 contribute to the NADP(+) site.

Belongs to the tetrahydrofolate dehydrogenase/cyclohydrolase family. In terms of assembly, homodimer.

It catalyses the reaction (6R)-5,10-methylene-5,6,7,8-tetrahydrofolate + NADP(+) = (6R)-5,10-methenyltetrahydrofolate + NADPH. It carries out the reaction (6R)-5,10-methenyltetrahydrofolate + H2O = (6R)-10-formyltetrahydrofolate + H(+). Its pathway is one-carbon metabolism; tetrahydrofolate interconversion. Catalyzes the oxidation of 5,10-methylenetetrahydrofolate to 5,10-methenyltetrahydrofolate and then the hydrolysis of 5,10-methenyltetrahydrofolate to 10-formyltetrahydrofolate. This chain is Bifunctional protein FolD, found in Leptospira borgpetersenii serovar Hardjo-bovis (strain JB197).